A 300-amino-acid chain; its full sequence is Protoheme IX farnesyltransferase (300 aa).

Helical transmembrane passes span 24–44 (VTQL…PGMV), 48–68 (VLIG…AINC), 94–114 (PQIL…LYTF), 118–138 (LTMW…TLLL), 146–166 (IVIG…AVTG), 172–192 (AWIL…VLAL), 217–237 (LHIL…FISG), 239–259 (SGAV…AYAW), and 278–298 (IVYL…RPLL).

The protein belongs to the UbiA prenyltransferase family. Protoheme IX farnesyltransferase subfamily.

The protein resides in the cell inner membrane. The catalysed reaction is heme b + (2E,6E)-farnesyl diphosphate + H2O = Fe(II)-heme o + diphosphate. The protein operates within porphyrin-containing compound metabolism; heme O biosynthesis; heme O from protoheme: step 1/1. Its function is as follows. Converts heme B (protoheme IX) to heme O by substitution of the vinyl group on carbon 2 of heme B porphyrin ring with a hydroxyethyl farnesyl side group. The sequence is that of Protoheme IX farnesyltransferase from Burkholderia vietnamiensis (strain G4 / LMG 22486) (Burkholderia cepacia (strain R1808)).